Consider the following 406-residue polypeptide: Elongation factor Tu-B (406 aa).

Residues Lys10–Val215 form the tr-type G domain. The segment at Gly19–Thr26 is G1. Position 19 to 26 (Gly19 to Thr26) interacts with GTP. Thr26 contributes to the Mg(2+) binding site. A G2 region spans residues Gly61 to Asn65. The G3 stretch occupies residues Asp82–Gly85. GTP-binding positions include Asp82 to His86 and Asn137 to Asp140. The G4 stretch occupies residues Asn137–Asp140. The tract at residues Ser175–Leu177 is G5. The residue at position 395 (Thr395) is a Phosphothreonine.

It belongs to the TRAFAC class translation factor GTPase superfamily. Classic translation factor GTPase family. EF-Tu/EF-1A subfamily. Monomer. Post-translationally, phosphorylated on a threonine.

It is found in the cytoplasm. It carries out the reaction GTP + H2O = GDP + phosphate + H(+). GTP hydrolase that promotes the GTP-dependent binding of aminoacyl-tRNA to the A-site of ribosomes during protein biosynthesis. In terms of biological role, protects glycyl-tRNA(Gly) from hydrolysis by E.coli D-aminoacyl-tRNA deacylase (dtd). This is Elongation factor Tu-B from Thermus thermophilus (strain ATCC 27634 / DSM 579 / HB8).